Consider the following 81-residue polypeptide: Exodeoxyribonuclease 7 small subunit (81 aa).

Belongs to the XseB family. In terms of assembly, heterooligomer composed of large and small subunits.

Its subcellular location is the cytoplasm. The enzyme catalyses Exonucleolytic cleavage in either 5'- to 3'- or 3'- to 5'-direction to yield nucleoside 5'-phosphates.. In terms of biological role, bidirectionally degrades single-stranded DNA into large acid-insoluble oligonucleotides, which are then degraded further into small acid-soluble oligonucleotides. In Ruegeria sp. (strain TM1040) (Silicibacter sp.), this protein is Exodeoxyribonuclease 7 small subunit.